The following is a 648-amino-acid chain: p-hydroxybenzoic acid efflux pump subunit AaeB (648 aa).

11 helical membrane-spanning segments follow: residues F11 to L31, A41 to I61, G65 to I87, L91 to L110, T125 to L145, E150 to V170, L369 to V389, F406 to P426, Q430 to V450, M458 to I478, and F481 to V501.

Belongs to the aromatic acid exporter ArAE (TC 2.A.85) family.

It localises to the cell inner membrane. In terms of biological role, forms an efflux pump with AaeA. Could function as a metabolic relief valve, allowing to eliminate certain compounds when they accumulate to high levels in the cell. In Edwardsiella ictaluri (strain 93-146), this protein is p-hydroxybenzoic acid efflux pump subunit AaeB.